The sequence spans 695 residues: WD repeat-containing protein 93 (695 aa).

The tract at residues 1–35 (MSSFKGNQAQKRRLSVFPKGPLEIPSPTEADWPKD) is disordered. The stretch at 421-460 (PCAAPIVMSQISSFSSYLALVCEDGVLILWDLAEGFLFGV) is one WD repeat.

Testis-specific. Expressed in spermatogonia, spermatocytes and spermatids.

This Mus musculus (Mouse) protein is WD repeat-containing protein 93 (Wdr93).